The chain runs to 159 residues: Transcription elongation factor GreA (159 aa).

The stretch at 43–76 forms a coiled coil; that stretch reads LSENAEYDAAREEQSQLEAKIGDLENKLASATIL.

It belongs to the GreA/GreB family.

Its function is as follows. Necessary for efficient RNA polymerase transcription elongation past template-encoded arresting sites. The arresting sites in DNA have the property of trapping a certain fraction of elongating RNA polymerases that pass through, resulting in locked ternary complexes. Cleavage of the nascent transcript by cleavage factors such as GreA or GreB allows the resumption of elongation from the new 3'terminus. GreA releases sequences of 2 to 3 nucleotides. This chain is Transcription elongation factor GreA, found in Chlorobaculum parvum (strain DSM 263 / NCIMB 8327) (Chlorobium vibrioforme subsp. thiosulfatophilum).